The chain runs to 375 residues: Succinyl-diaminopimelate desuccinylase (375 aa).

Residue His66 coordinates Zn(2+). Asp68 is an active-site residue. Position 99 (Asp99) interacts with Zn(2+). Residue Glu133 is the Proton acceptor of the active site. Zn(2+) is bound by residues Glu134, Glu162, and His348.

The protein belongs to the peptidase M20A family. DapE subfamily. In terms of assembly, homodimer. Requires Zn(2+) as cofactor. It depends on Co(2+) as a cofactor.

It carries out the reaction N-succinyl-(2S,6S)-2,6-diaminopimelate + H2O = (2S,6S)-2,6-diaminopimelate + succinate. Its pathway is amino-acid biosynthesis; L-lysine biosynthesis via DAP pathway; LL-2,6-diaminopimelate from (S)-tetrahydrodipicolinate (succinylase route): step 3/3. Catalyzes the hydrolysis of N-succinyl-L,L-diaminopimelic acid (SDAP), forming succinate and LL-2,6-diaminopimelate (DAP), an intermediate involved in the bacterial biosynthesis of lysine and meso-diaminopimelic acid, an essential component of bacterial cell walls. This is Succinyl-diaminopimelate desuccinylase from Escherichia coli O17:K52:H18 (strain UMN026 / ExPEC).